The sequence spans 169 residues: Cilia- and flagella-associated protein 68 (169 aa).

2 mn regions span residues 98–109 and 139–149; these read TTYDTSYNNRRP and KSTYMTSYSKP.

This sequence belongs to the CFAP68 family. Microtubule inner protein component of sperm flagellar doublet microtubules.

The protein localises to the cytoplasm. The protein resides in the cytoskeleton. It is found in the cilium axoneme. It localises to the flagellum axoneme. Its subcellular location is the nucleus. The protein localises to the cell projection. The protein resides in the cilium. Microtubule inner protein (MIP) part of the dynein-decorated doublet microtubules (DMTs) in cilia axoneme, which is required for motile cilia beating. This is Cilia- and flagella-associated protein 68 (CFAP68) from Bos taurus (Bovine).